Consider the following 1112-residue polypeptide: Rho GTPase-activating protein 7 (1112 aa).

Residues 37 to 104 (LAEIEAKEAC…LNKCAVMKLE (68 aa)) enclose the SAM domain. Phosphoserine is present on residues serine 112, serine 115, and serine 155. Disordered regions lie at residues 146–203 (SPKQ…APAR), 318–350 (RSISSSTQTSSSSSQSETSSNVSTPSPVTRTRS), 405–459 (PKAL…VSSR), and 512–574 (SDEG…GVGA). Residues 183–193 (VHSTGSLTTHA) are compositionally biased toward polar residues. Residues 296–468 (QLNCVEISAL…RLSIYDNVPG (173 aa)) form a focal adhesion-targeting (FAT) region. Composition is skewed to low complexity over residues 320–348 (ISSSTQTSSSSSQSETSSNVSTPSPVTRT) and 409–423 (SNGSFSPSGNNSSVN). Serine 343 carries the post-translational modification Phosphoserine. The segment covering 437 to 446 (LRRENSSPKE) has biased composition (basic and acidic residues). Polar residues predominate over residues 520–532 (ALDSVSPCPSSPK). Over residues 534 to 544 (IHLDVDNDRAT) the composition is skewed to basic and acidic residues. Polar residues predominate over residues 547–556 (DLDSTGNSLN). The segment at 635 to 657 (KHGFSWAVPKFMKRIKVPDYKDR) is polybasic cluster (PBR). One can recognise a Rho-GAP domain in the interval 662–868 (VPLTVNVQRT…HMIAECKKLF (207 aa)). Residues 898-1105 (CNDDSADYQH…RDSFSHQNTE (208 aa)) enclose the START domain.

As to quaternary structure, interacts with EF1A1, facilitates EF1A1 distribution to the membrane periphery and ruffles upon growth factor stimulation and suppresses cell migration. Interacts with tensin TNS1 (via N-terminus); the interaction is decreased by phosphorylation of TNS1. Interacts with TNS3 and PTEN; in resting cells, interacts with TNS3 (via C2 tensin-type domain) but, following growth factor stimulation, TNS3 and PTEN are phosphorylated which leads to weakened interaction with TNS3 and enhanced interaction with PTEN. Interacts (via C-terminus) with tensin TNS4 (via SH2 domain); the interaction is independent of tyrosine phosphorylation of DLC1.

The protein localises to the cytoplasm. It localises to the cell junction. Its subcellular location is the focal adhesion. It is found in the membrane. Its function is as follows. Functions as a GTPase-activating protein for the small GTPases RHOA, RHOB, RHOC and CDC42, terminating their downstream signaling. This induces morphological changes and detachment through cytoskeletal reorganization, playing a critical role in biological processes such as cell migration and proliferation. Also functions in vivo as an activator of the phospholipase PLCD1. Active DLC1 increases cell migration velocity but reduces directionality. Required for growth factor-induced epithelial cell migration; in resting cells, interacts with TNS3 while PTEN interacts with the p85 regulatory subunit of the PI3K kinase complex but growth factor stimulation induces phosphorylation of TNS3 and PTEN, causing them to change their binding preference so that PTEN interacts with DLC1 and TNS3 interacts with p85. The PTEN-DLC1 complex translocates to the posterior of migrating cells to activate RHOA while the TNS3-p85 complex translocates to the leading edge of migrating cells to promote RAC1 activation. The protein is Rho GTPase-activating protein 7 (DLC1) of Bos taurus (Bovine).